Reading from the N-terminus, the 70-residue chain is Cold shock-like protein CspG (70 aa).

Positions 7–67 constitute a CSD domain; it reads GLVKWFNEEK…GQKGLQAANV (61 aa).

It localises to the cytoplasm. This chain is Cold shock-like protein CspG (cspG), found in Shewanella violacea (strain JCM 10179 / CIP 106290 / LMG 19151 / DSS12).